We begin with the raw amino-acid sequence, 358 residues long: L-Ala-D/L-Glu epimerase (358 aa).

Substrate-binding residues include Arg24, Thr135, and Lys160. Lys162 functions as the Proton acceptor; specific for (R)-substrate epimerization in the catalytic mechanism. Mg(2+) is bound by residues Asp190, Glu218, and Asp243. Lys267 acts as the Proton acceptor; specific for (S)-substrate epimerization in catalysis. 3 residues coordinate substrate: Cys295, Asp320, and Asp322.

It belongs to the mandelate racemase/muconate lactonizing enzyme family. Requires Mg(2+) as cofactor.

The catalysed reaction is L-alanyl-L-glutamate = L-alanyl-D-glutamate. The protein operates within cell wall degradation; peptidoglycan degradation. Catalyzes the epimerization of L-Ala-D-Glu to L-Ala-L-Glu and has probably a role in the metabolism of the murein peptide, of which L-Ala-D-Glu is a component. Is also able to catalyze the epimerization of L-Ala-D-Asp. The sequence is that of L-Ala-D/L-Glu epimerase from Clostridium acetobutylicum (strain ATCC 824 / DSM 792 / JCM 1419 / IAM 19013 / LMG 5710 / NBRC 13948 / NRRL B-527 / VKM B-1787 / 2291 / W).